Here is a 204-residue protein sequence, read N- to C-terminus: Guanylate kinase (204 aa).

A Guanylate kinase-like domain is found at 18–196; that stretch reads PKLFTISAPA…SYEILKSIFI (179 aa). An ATP-binding site is contributed by 25 to 32; it reads APAGAGKT.

Belongs to the guanylate kinase family.

The protein resides in the cytoplasm. It catalyses the reaction GMP + ATP = GDP + ADP. Functionally, essential for recycling GMP and indirectly, cGMP. This Chlamydia caviae (strain ATCC VR-813 / DSM 19441 / 03DC25 / GPIC) (Chlamydophila caviae) protein is Guanylate kinase.